The primary structure comprises 371 residues: Ferrochelatase (371 aa).

Residues His-218 and Glu-299 each contribute to the Fe cation site.

It belongs to the ferrochelatase family.

Its subcellular location is the cytoplasm. It catalyses the reaction heme b + 2 H(+) = protoporphyrin IX + Fe(2+). It participates in porphyrin-containing compound metabolism; protoheme biosynthesis; protoheme from protoporphyrin-IX: step 1/1. In terms of biological role, catalyzes the ferrous insertion into protoporphyrin IX. This Ralstonia nicotianae (strain ATCC BAA-1114 / GMI1000) (Ralstonia solanacearum) protein is Ferrochelatase.